A 554-amino-acid chain; its full sequence is Dihydroxy-acid dehydratase (554 aa).

Cys48 contacts [2Fe-2S] cluster. Residue Asp80 participates in Mg(2+) binding. Cys121 contacts [2Fe-2S] cluster. Residues Asp122 and Lys123 each coordinate Mg(2+). An N6-carboxylysine modification is found at Lys123. Residue Cys193 participates in [2Fe-2S] cluster binding. Glu444 is a Mg(2+) binding site. Ser470 serves as the catalytic Proton acceptor.

Belongs to the IlvD/Edd family. Homodimer. Requires [2Fe-2S] cluster as cofactor. Mg(2+) is required as a cofactor.

The catalysed reaction is (2R)-2,3-dihydroxy-3-methylbutanoate = 3-methyl-2-oxobutanoate + H2O. The enzyme catalyses (2R,3R)-2,3-dihydroxy-3-methylpentanoate = (S)-3-methyl-2-oxopentanoate + H2O. It functions in the pathway amino-acid biosynthesis; L-isoleucine biosynthesis; L-isoleucine from 2-oxobutanoate: step 3/4. The protein operates within amino-acid biosynthesis; L-valine biosynthesis; L-valine from pyruvate: step 3/4. Functionally, functions in the biosynthesis of branched-chain amino acids. Catalyzes the dehydration of (2R,3R)-2,3-dihydroxy-3-methylpentanoate (2,3-dihydroxy-3-methylvalerate) into 2-oxo-3-methylpentanoate (2-oxo-3-methylvalerate) and of (2R)-2,3-dihydroxy-3-methylbutanoate (2,3-dihydroxyisovalerate) into 2-oxo-3-methylbutanoate (2-oxoisovalerate), the penultimate precursor to L-isoleucine and L-valine, respectively. This is Dihydroxy-acid dehydratase from Tremblaya princeps.